The sequence spans 396 residues: Elongation factor Tu (396 aa).

The region spanning 10–206 (KPHVNVGTIG…ALDSYIPEPE (197 aa)) is the tr-type G domain. The segment at 19–26 (GHVDHGKT) is G1. A GTP-binding site is contributed by 19–26 (GHVDHGKT). Residue Thr26 participates in Mg(2+) binding. Residues 60–64 (GITIN) are G2. The interval 81–84 (DCPG) is G3. Residues 81-85 (DCPGH) and 136-139 (NKCD) each bind GTP. The interval 136 to 139 (NKCD) is G4. The tract at residues 174 to 176 (SAL) is G5.

The protein belongs to the TRAFAC class translation factor GTPase superfamily. Classic translation factor GTPase family. EF-Tu/EF-1A subfamily. In terms of assembly, monomer.

It is found in the cytoplasm. It carries out the reaction GTP + H2O = GDP + phosphate + H(+). Its function is as follows. GTP hydrolase that promotes the GTP-dependent binding of aminoacyl-tRNA to the A-site of ribosomes during protein biosynthesis. This is Elongation factor Tu from Acinetobacter baumannii (strain ATCC 17978 / DSM 105126 / CIP 53.77 / LMG 1025 / NCDC KC755 / 5377).